A 481-amino-acid polypeptide reads, in one-letter code: Alpha-ketoglutaric semialdehyde dehydrogenase 1 (481 aa).

NADP(+) is bound by residues 154-155, 178-181, and 231-232; these read WN, KAPE, and GS. Glu-253 serves as the catalytic Proton acceptor. Leu-254 contacts NADP(+). The active-site Nucleophile is Cys-287. Glu-384 provides a ligand contact to NADP(+).

This sequence belongs to the aldehyde dehydrogenase family. In terms of assembly, homotetramer.

The catalysed reaction is 2,5-dioxopentanoate + NADP(+) + H2O = 2-oxoglutarate + NADPH + 2 H(+). It catalyses the reaction 2,5-dioxopentanoate + NAD(+) + H2O = 2-oxoglutarate + NADH + 2 H(+). The enzyme catalyses succinate semialdehyde + NAD(+) + H2O = succinate + NADH + 2 H(+). Its function is as follows. Catalyzes the NAD(P)(+)-dependent oxidation of alpha-ketoglutaric semialdehyde (alphaKGSA) to alpha-ketoglutarate. Is involved in a degradation pathway of L-arabinose that allows A.brasilense to grow on L-arabinose as a sole carbon source. Prefers NAD(+) to NADP(+) as a cosubstrate. Displays broad substrate specificity: exhibits the highest activity with alphaKGSA and succinic semialdehyde as substrates, but to a lesser extent, is also active with glutaraldehyde, benzaldehyde, and a number of aldehydes from C3 to C8. This chain is Alpha-ketoglutaric semialdehyde dehydrogenase 1 (araE), found in Azospirillum brasilense.